Reading from the N-terminus, the 429-residue chain is Intraflagellar transport protein 57 homolog (429 aa).

Residues glutamate 304–aspartate 369 adopt a coiled-coil conformation. Residues glycine 335–threonine 426 form a pDED region.

The protein belongs to the IFT57 family. In terms of assembly, component of the IFT complex B, at least composed of IFT20, IFT22, IFT25, IFT27, IFT46, IFT52, TRAF3IP1/IFT54, IFT57, IFT74, IFT80, IFT81, and IFT88. Interacts with IFT20. Interacts with IFT88. Interacts with IFT80, IFT-81, IFT74, IFT172, IFT70B and KIF17. Interacts with BLOC1S2. Interacts with RYBP. Interacts with HOMER1; the interaction possibly prevents the pro-apoptotic effects of IFT57. Interacts with HIP1. In normal conditions, it poorly interacts with HIP1, HIP1 being strongly associated with HTT. However, in mutant HTT proteins with a long poly-Gln region, interaction between HTT and HIP1 is inhibited, promoting the interaction between HIP1 and IFT57, leading to apoptosis. Interacts with BFAR. Interacts with TTC25. Interacts with USH1G. Interacts with chicken anemia virus protein apoptin. As to expression, present in many tissues such as brain, thymus, lymph node, lung, liver, skin and kidney (at protein level).

It localises to the cell projection. The protein localises to the cilium. It is found in the cytoplasm. Its subcellular location is the cytoskeleton. The protein resides in the cilium basal body. Required for the formation of cilia. Plays an indirect role in sonic hedgehog signaling, cilia being required for all activity of the hedgehog pathway. Has pro-apoptotic function via its interaction with HIP1, leading to recruit caspase-8 (CASP8) and trigger apoptosis. Has the ability to bind DNA sequence motif 5'-AAAGACATG-3' present in the promoter of caspase genes such as CASP1, CASP8 and CASP10, suggesting that it may act as a transcription regulator; however the relevance of such function remains unclear. This is Intraflagellar transport protein 57 homolog (IFT57) from Homo sapiens (Human).